Consider the following 355-residue polypeptide: MPRTISLAVVPGDGIGPEVVHEALRVLREAVPADVSLDTTQYPFGAGHFLETGQILTDSDLAALAQHDAILLGAVGGDPRDARLAGGIIERGLLLKLRFAFDHYINLRPTALLPGVASPLAAPGQVDFVVVREGTEGPYAGNGGVLRRGTEHEIATEVSVNTAHGVERTVRFAFELAEKRDRKRVTLVHKTNVLTFAGSLWQRTVDRVAAEHPDVTVDYLHVDATMIFLVTDPSRFDVIVSDNLFGDIITDLAAAISGGIGLAASGNVNPTGAFPSMFEPVHGSAPDIAGQQKADPTAAILSVALLLDHLGLSEAAARVSAAVSDDLAARATGDAAPRSTAEVGDAILRALSTNH.

The substrate site is built by arginine 98, arginine 108, arginine 132, and aspartate 223. The Mg(2+) site is built by aspartate 223, aspartate 247, and aspartate 251. 283-295 (GSAPDIAGQQKAD) is a binding site for NAD(+).

It belongs to the isocitrate and isopropylmalate dehydrogenases family. LeuB type 2 subfamily. In terms of assembly, homodimer. It depends on Mg(2+) as a cofactor. The cofactor is Mn(2+).

It is found in the cytoplasm. The catalysed reaction is (2R,3S)-3-isopropylmalate + NAD(+) = 4-methyl-2-oxopentanoate + CO2 + NADH. It functions in the pathway amino-acid biosynthesis; L-leucine biosynthesis; L-leucine from 3-methyl-2-oxobutanoate: step 3/4. Functionally, catalyzes the oxidation of 3-carboxy-2-hydroxy-4-methylpentanoate (3-isopropylmalate) to 3-carboxy-4-methyl-2-oxopentanoate. The product decarboxylates to 4-methyl-2 oxopentanoate. The protein is 3-isopropylmalate dehydrogenase of Clavibacter sepedonicus (Clavibacter michiganensis subsp. sepedonicus).